A 301-amino-acid polypeptide reads, in one-letter code: Transcription elongation factor A protein 1 (301 aa).

M1 is modified (N-acetylmethionine). Positions D3–P80 constitute a TFIIS N-terminal domain. Residue K55 forms a Glycyl lysine isopeptide (Lys-Gly) (interchain with G-Cter in ubiquitin) linkage. Residues S57, S81, S97, and S100 each carry the phosphoserine modification. Over residues L76–P93 the composition is skewed to basic and acidic residues. A disordered region spans residues L76–S139. The region spanning V140–T256 is the TFIIS central domain. The TFIIS-type zinc finger occupies D259 to K299. Zn(2+) is bound by residues C263, C266, C291, and C294.

This sequence belongs to the TFS-II family. Interacts with EAF2. Associates with UBR5 and forms a transcription regulatory complex made of CDK9, Pol II, UBR5 and TCEA1/TFIIS. Part of TBP-based Pol II pre-initiation complex (PIC), in which Pol II core assembles with general transcription factors and other specific initiation factors including GTF2E1, GTF2E2, GTF2F1, GTF2F2, TCEA1, ERCC2, ERCC3, GTF2H2, GTF2H3, GTF2H4, GTF2H5, GTF2A1, GTF2A2, GTF2B and TBP; this large multi-subunit PIC complex mediates DNA unwinding and targets Pol II core to the transcription start site where the first phosphodiester bond forms.

It localises to the nucleus. Its function is as follows. Necessary for efficient RNA polymerase II transcription elongation past template-encoded arresting sites. The arresting sites in DNA have the property of trapping a certain fraction of elongating RNA polymerases that pass through, resulting in locked ternary complexes. Cleavage of the nascent transcript by S-II allows the resumption of elongation from the new 3'-terminus. The sequence is that of Transcription elongation factor A protein 1 (Tcea1) from Mus musculus (Mouse).